Reading from the N-terminus, the 483-residue chain is V-type proton ATPase subunit H (483 aa).

At serine 483 the chain carries Phosphoserine.

This sequence belongs to the V-ATPase H subunit family. As to quaternary structure, V-ATPase is a heteromultimeric enzyme made up of two complexes: the ATP-hydrolytic V1 complex and the proton translocation V0 complex. The V1 complex consists of three catalytic AB heterodimers that form a heterohexamer, three peripheral stalks each consisting of EG heterodimers, one central rotor including subunits D and F, and the regulatory subunits C and H. The proton translocation complex V0 consists of the proton transport subunit a, a ring of proteolipid subunits c9c'', rotary subunit d, subunits e and f, and the accessory subunits ATP6AP1/Ac45 and ATP6AP2/PRR. Interacts with AP2M1. As to expression, expressed in brain (at protein level).

The protein resides in the cytoplasmic vesicle. It is found in the clathrin-coated vesicle membrane. Functionally, subunit of the V1 complex of vacuolar(H+)-ATPase (V-ATPase), a multisubunit enzyme composed of a peripheral complex (V1) that hydrolyzes ATP and a membrane integral complex (V0) that translocates protons. V-ATPase is responsible for acidifying and maintaining the pH of intracellular compartments and in some cell types, is targeted to the plasma membrane, where it is responsible for acidifying the extracellular environment. Subunit H is essential for V-ATPase activity, but not for the assembly of the complex. Involved in the endocytosis mediated by clathrin-coated pits, required for the formation of endosomes. This Bos taurus (Bovine) protein is V-type proton ATPase subunit H (ATP6V1H).